The primary structure comprises 550 residues: Cell pattern formation-associated protein STUA (550 aa).

The 107-residue stretch at 86 to 192 (RVTATLWEDE…HNIGALLYHP (107 aa)) folds into the HTH APSES-type domain. The H-T-H motif DNA-binding region spans 120-141 (GTKLLNVAGMTRGRRDGILKSE). The span at 246 to 266 (SLANGPQSLASTPQPLTNGSQ) shows a compositional bias: polar residues. Disordered stretches follow at residues 246-277 (SLAN…GMLK), 371-412 (HHQP…VKRR), 447-467 (KRRD…DHLN), and 527-550 (APVY…QSFG). Positions 385–395 (RGRDEDDDVHR) are enriched in basic and acidic residues. A nuclear localization domain region spans residues 517-546 (TVAASPSYPSAPVYDTGARPPSAISAPRRQ).

This sequence belongs to the EFG1/PHD1/stuA family.

It localises to the nucleus. Transcription factor that regulates asexual reproduction. Binds the StuA-response elements (StRE) with the consensus sequence 5'-(A/T)CGCG(T/A)N(A/C)-3' at the promoters of target genes. Differentially regulates the development of macroconidia, microconidia, and chlamydospores. Acts as a positive regulator for the development of macroconidia and as a negative regulator for the development of chlamydospores. Involved in microconidium formation specifically in infected plants. This is Cell pattern formation-associated protein STUA from Fusarium oxysporum (Fusarium vascular wilt).